A 102-amino-acid chain; its full sequence is Co-chaperonin GroES (102 aa).

Belongs to the GroES chaperonin family. As to quaternary structure, heptamer of 7 subunits arranged in a ring. Interacts with the chaperonin GroEL.

The protein resides in the cytoplasm. Together with the chaperonin GroEL, plays an essential role in assisting protein folding. The GroEL-GroES system forms a nano-cage that allows encapsulation of the non-native substrate proteins and provides a physical environment optimized to promote and accelerate protein folding. GroES binds to the apical surface of the GroEL ring, thereby capping the opening of the GroEL channel. In Chlamydia felis (strain Fe/C-56) (Chlamydophila felis), this protein is Co-chaperonin GroES.